The following is a 351-amino-acid chain: Pleckstrin (351 aa).

Residues 4–101 enclose the PH 1 domain; it reads KRIREGYLVK…WVRDTKKAIK (98 aa). N6-acetyllysine is present on K64. Residues S113 and S117 each carry the phosphoserine modification. One can recognise a DEP domain in the interval 136–221; it reads IEKGIKELNL…NPDAFYYFPD (86 aa). A PH 2 domain is found at 244–348; the sequence is VIIKQGCLLK…WIKAIQVASR (105 aa).

Major protein kinase C substrate of platelets. The chain is Pleckstrin (PLEK) from Canis lupus familiaris (Dog).